The sequence spans 318 residues: Quinolinate synthase (318 aa).

2 residues coordinate iminosuccinate: H34 and S51. [4Fe-4S] cluster is bound at residue C96. Iminosuccinate is bound by residues 122 to 124 and S139; that span reads YIN. C182 serves as a coordination point for [4Fe-4S] cluster. Iminosuccinate contacts are provided by residues 208 to 210 and T225; that span reads HPE. C275 contributes to the [4Fe-4S] cluster binding site.

Belongs to the quinolinate synthase family. Type 2 subfamily. [4Fe-4S] cluster serves as cofactor.

Its subcellular location is the cytoplasm. It carries out the reaction iminosuccinate + dihydroxyacetone phosphate = quinolinate + phosphate + 2 H2O + H(+). Its pathway is cofactor biosynthesis; NAD(+) biosynthesis; quinolinate from iminoaspartate: step 1/1. Its function is as follows. Catalyzes the condensation of iminoaspartate with dihydroxyacetone phosphate to form quinolinate. In Synechocystis sp. (strain ATCC 27184 / PCC 6803 / Kazusa), this protein is Quinolinate synthase.